We begin with the raw amino-acid sequence, 397 residues long: Natural killer cell receptor 2B4 (397 aa).

The first 19 residues, 1-19 (MLGQAVLFTTFLLLRAHQG), serve as a signal peptide directing secretion. Over 20 to 226 (QDCPDSSEEV…SVPSNFRFLP (207 aa)) the chain is Extracellular. C22 and C119 are joined by a disulfide. Ig-like domains follow at residues 22–129 (CPDS…LILD) and 131–215 (VETP…THGC). 7 N-linked (GlcNAc...) asparagine glycosylation sites follow: N78, N145, N161, N178, N197, N206, and N210. A disulfide bridge connects residues C154 and C196. A helical membrane pass occupies residues 227–247 (FGVIIVILVTLFLGAIICFCV). Topologically, residues 248–397 (WTKKRKQLQF…RELENFDVYS (150 aa)) are cytoplasmic. An ITSM 1 motif is present at residues 264–269 (TIYEYV). Y266 is modified (phosphotyrosine). Over residues 277–290 (DQQGCSRASGSPSA) the composition is skewed to polar residues. The disordered stretch occupies residues 277-300 (DQQGCSRASGSPSAVQEDGRGQRE). 3 consecutive short sequence motifs (ITSM) follow at residues 323–328 (TMYSMI), 342–347 (TVYSVV), and 367–372 (TVYEEV). At Y325 the chain carries Phosphotyrosine; by FYN. Y344 carries the post-translational modification Phosphotyrosine. The residue at position 369 (Y369) is a Phosphotyrosine; by FYN.

Interacts with CD48. Interacts (via phosphorylated ITSM 1-4) with SH2D1A/SAP (via SH2 domain); SH2D1A probably mediates association with FYN. Interacts (via phosphorylated ITSM 3) with PTPN11/SHP-2, INPP5D/SHIP1, PTPN6/SHP-1 and CSK; binding of SH2D1A prevents association with PTPN11, PTPN6 and CSK. Interacts weakly (via phosphorylated ITSM 2) with PTPN11 and CSK. Interacts with SH2D1B and SH2D1B2. Interacts with MHC class I proteins; the interaction is proposed to prevent self-killing of NK cells. N-linked glycosylation is essential for the binding to its ligand CD48. Also O-glycosylated, in contrast, O-linked sialylation has a negative impact on ligand binding. In terms of processing, phosphorylated by FYN and CSK on tyrosine residues following activation. Coligation with inhibitory receptors such as KIR2DL1 inhibits phosphorylation upon contact of NK cells with sensitive target cells. As to expression, expressed in natural killer (NK) cells, T cells and dendritic cells.

It is found in the membrane. The protein resides in the cell membrane. It localises to the membrane raft. Functionally, heterophilic receptor of the signaling lymphocytic activation molecule (SLAM) family; its ligand is CD48. SLAM receptors triggered by homo- or heterotypic cell-cell interactions are modulating the activation and differentiation of a wide variety of immune cells and thus are involved in the regulation and interconnection of both innate and adaptive immune response. Activities are controlled by presence or absence of small cytoplasmic adapter proteins, SH2D1A/SAP and/or SH2D1B/EAT-2. Acts as activating natural killer (NK) cell receptor. Activating function implicates association with SH2D1A and FYN. Downstreaming signaling involves predominantly VAV1, and, to a lesser degree, INPP5D/SHIP1 and CBL. Signal attenuation in the absence of SH2D1A is proposed to be dependent on INPP5D and to a lesser extent PTPN6/SHP-1 and PTPN11/SHP-2. Stimulates NK cell cytotoxicity, production of IFN-gamma and granule exocytosis. Optimal expansion and activation of NK cells seems to be dependent on the engagement of CD244 with CD48 expressed on neighboring NK cells. Regulation of NK cell activity by adapters Sh2d1b and Sh2d1b2 is reported conflictingly. Acts as costimulator in NK activation by enhancing signals by other NK receptors such as NCR3 and NCR1. At early stages of NK cell differentiation may function as an inhibitory receptor possibly ensuring the self-tolerance of developing NK cells. Involved in the regulation of CD8(+) T-cell proliferation; expression on activated T-cells and binding to CD48 provides costimulatory-like function for neighboring T-cells. Inhibits inflammatory responses in dendritic cells (DCs). This Mus musculus (Mouse) protein is Natural killer cell receptor 2B4 (Cd244).